The following is a 138-amino-acid chain: Large ribosomal subunit protein bL19 (138 aa).

Belongs to the bacterial ribosomal protein bL19 family.

Its function is as follows. This protein is located at the 30S-50S ribosomal subunit interface and may play a role in the structure and function of the aminoacyl-tRNA binding site. The protein is Large ribosomal subunit protein bL19 of Rickettsia canadensis (strain McKiel).